Reading from the N-terminus, the 985-residue chain is Rho guanine nucleotide exchange factor 2 (985 aa).

The segment at 1–32 (MSRIESLTRARIDRSKEQATKTREKEKMKEAK) is disordered. The Phorbol-ester/DAG-type zinc finger occupies 39–86 (GHLFTTISVSGMTMCYACNKSITAKEALICPTCNVTIHNRCKDTLANC). 5 positions are modified to phosphoserine: Ser-109, Ser-122, Ser-129, Ser-133, and Ser-137. Positions 131–161 (RQSLLGSRRGLSSLSLAKSVSTTNIAGHFND) are interaction with DYNLT1. Ser-143 carries the post-translational modification Phosphoserine; by PAK4. A phosphoserine mark is found at Ser-151, Ser-163, Ser-172, Ser-174, and Ser-177. One can recognise a DH domain in the interval 236–433 (KKQDVIYELI…KELLSNVDQD (198 aa)). Lys-354 carries the N6-acetyllysine modification. The 100-residue stretch at 473 to 572 (KLIHEGCLLW…WIRVIQQSVR (100 aa)) folds into the PH domain. Residues 591 to 619 (LRRIKTKLQQKNQALVELLQKNVELFAEM) are a coiled coil. A phosphoserine mark is found at Ser-646 and Ser-649. A Phosphothreonine; by MAPK1 or MAPK3 modification is found at Thr-680. A phosphoserine mark is found at Ser-692, Ser-710, and Ser-781. Thr-795 is modified (phosphothreonine). A coiled-coil region spans residues 797 to 866 (EKQATELALL…RQLAALGQNE (70 aa)). The residue at position 885 (Ser-885) is a Phosphoserine. Disordered regions lie at residues 890-909 (DALY…DRLD) and 918-985 (HRPF…ASES). Tyr-893 is subject to Phosphotyrosine. A Phosphoserine; by PAK4 modification is found at Ser-895. Positions 919 to 938 (RPFDDREAQELGSPEDRLQD) are enriched in basic and acidic residues. 3 positions are modified to phosphoserine: Ser-931, Ser-939, and Ser-940. Residues 940–949 (SDPDTGSEEE) are compositionally biased toward acidic residues. A Phosphothreonine modification is found at Thr-944. 5 positions are modified to phosphoserine: Ser-946, Ser-951, Ser-952, Ser-955, and Ser-959.

In terms of assembly, found in a complex composed at least of ARHGEF2, NOD2 and RIPK2. Interacts with RIPK2; the interaction mediates tyrosine phosphorylation of RIPK2 by Src kinase CSK. Interacts with RIPK1 and RIPK3. Interacts with YWHAZ/14-3-3 zeta; when phosphorylated at Ser-885. Interacts with the kinases PAK4, AURKA and MAPK1. Interacts with RHOA and RAC1. Interacts with NOD1. Interacts (via the N- terminal zinc finger) with CAPN6 (via domain II). Interacts with DYNLT1. In terms of processing, phosphorylation of Ser-885 by PAK1 induces binding to protein YWHAZ, promoting its relocation to microtubules and the inhibition of its activity. Phosphorylated by AURKA and CDK1 during mitosis, which negatively regulates its activity. Phosphorylation by MAPK1 or MAPK3 increases nucleotide exchange activity. Phosphorylation by PAK4 releases GEF-H1 from the microtubules. Phosphorylated on serine, threonine and tyrosine residues in a RIPK2-dependent manner. In terms of tissue distribution, ubiquitous, with the exception of liver tissue. Levels are high in hemopoietic tissues (thymus, spleen, bone marrow) as well as in kidney and lung. Expressed in the germinal zones of both the neocortex and the cerebellum and in the pontine gray nuclei.

The protein localises to the cytoplasm. It is found in the cytoskeleton. It localises to the cell junction. Its subcellular location is the tight junction. The protein resides in the golgi apparatus. The protein localises to the spindle. It is found in the cytoplasmic vesicle. Its function is as follows. Activates Rho-GTPases by promoting the exchange of GDP for GTP. May be involved in epithelial barrier permeability, cell motility and polarization, dendritic spine morphology, antigen presentation, leukemic cell differentiation, cell cycle regulation, innate immune response, and cancer. Binds Rac-GTPases, but does not seem to promote nucleotide exchange activity toward Rac-GTPases. May stimulate instead the cortical activity of Rac. Inactive toward CDC42, TC10, or Ras-GTPases. Forms an intracellular sensing system along with NOD1 for the detection of microbial effectors during cell invasion by pathogens. Involved in innate immune signaling transduction pathway promoting cytokine IL6/interleukin-6 and TNF-alpha secretion in macrophage upon stimulation by bacterial peptidoglycans; acts as a signaling intermediate between NOD2 receptor and RIPK2 kinase. Contributes to the tyrosine phosphorylation of RIPK2 through Src tyrosine kinase leading to NF-kappaB activation by NOD2. Overexpression activates Rho-, but not Rac-GTPases, and increases paracellular permeability. Involved in neuronal progenitor cell division and differentiation. Involved in the migration of precerebellar neurons. This Mus musculus (Mouse) protein is Rho guanine nucleotide exchange factor 2 (Arhgef2).